A 733-amino-acid polypeptide reads, in one-letter code: Cell division cycle protein 48 homolog AF_1297 (733 aa).

ATP is bound by residues 223–230 and 496–503; these read GPPGTGKT.

This sequence belongs to the AAA ATPase family. CDC48 subfamily.

The protein is Cell division cycle protein 48 homolog AF_1297 of Archaeoglobus fulgidus (strain ATCC 49558 / DSM 4304 / JCM 9628 / NBRC 100126 / VC-16).